The following is a 201-amino-acid chain: dCTP deaminase, dUMP-forming (201 aa).

DCTP is bound by residues 101–106 (KSSLGR), D119, 127–129 (TLE), Q148, Y162, and Q174. E129 (proton donor/acceptor) is an active-site residue.

This sequence belongs to the dCTP deaminase family. Homotrimer.

It catalyses the reaction dCTP + 2 H2O = dUMP + NH4(+) + diphosphate. It participates in pyrimidine metabolism; dUMP biosynthesis; dUMP from dCTP: step 1/1. Functionally, bifunctional enzyme that catalyzes both the deamination of dCTP to dUTP and the hydrolysis of dUTP to dUMP without releasing the toxic dUTP intermediate. The sequence is that of dCTP deaminase, dUMP-forming from Clavibacter michiganensis subsp. michiganensis (strain NCPPB 382).